The sequence spans 129 residues: Transcriptional activator protein (129 aa).

Positions 1-12 are enriched in low complexity; that stretch reads MRSSSPSQPPSI. The disordered stretch occupies residues 1-23; the sequence is MRSSSPSQPPSIKKAHRQAKKRA. Over residues 13-23 the composition is skewed to basic residues; that stretch reads KKAHRQAKKRA. Residues 13–28 carry the Nuclear localization signal motif; sequence KKAHRQAKKRAIRRRR. A zinc finger lies at 33 to 50; sequence CGCSIYFHIDCAGHGFTH. Residues 73 to 117 form a disordered region; sequence LFQDKPSRGHAIHQDQDIQRPNPVQPQPQESIGSPQSIPELPSLD. Residues 99 to 109 show a composition bias toward polar residues; that stretch reads QPQESIGSPQS. The tract at residues 115-129 is transactivation; the sequence is SLDDIDDSFWVELFS.

Belongs to the geminiviridae transcriptional activator protein family. Monomer. Homodimer. Homooligomer. Self-interaction correlates with nuclear localization and efficient activation of transcription. Monomers suppress local silencing by interacting with and inactivating host adenosine kinase 2 (ADK2) in the cytoplasm. Interacts with and inhibits host SNF1 kinase. Binds to ssDNA. Phosphorylated.

The protein resides in the host nucleus. Its subcellular location is the host cytoplasm. In terms of biological role, strong activator of the late viral genes promoters. Enhances the expression of the capsid protein and nuclear shuttle protein. Acts as a suppressor of RNA-mediated gene silencing, also known as post-transcriptional gene silencing (PTGS), a mechanism of plant viral defense that limits the accumulation of viral RNAs. Suppresses the host RNA silencing by inhibiting adenosine kinase 2 (ADK2), a kinase involved in a general methylation pathway. Also suppresses the host basal defense by interacting with and inhibiting SNF1 kinase, a key regulator of cell metabolism implicated in innate antiviral defense. Determines pathogenicity. The protein is Transcriptional activator protein of Solanum tuberosum (Potato).